The chain runs to 418 residues: Actin-like protein 7B (418 aa).

The disordered stretch occupies residues 1 to 42; sequence MATKNSPSPKPMGTAQGDPGEAGTLPAPEAAGIRDTGSTQLK. A Phosphoserine modification is found at S8.

It belongs to the actin family. As to expression, testis specific.

It localises to the cytoplasm. The protein resides in the cytoskeleton. The polypeptide is Actin-like protein 7B (Actl7b) (Mus musculus (Mouse)).